The sequence spans 93 residues: Sec-independent protein translocase protein TatA (93 aa).

The helical transmembrane segment at 1 to 21 (MGSLSPWHWAILAVVVILLFG) threads the bilayer. The segment at 45-93 (EMQSENKTETSALGAQSESSAANPTPVQSQRVDPPAPSEQGHSEARPAS) is disordered. Over residues 53–75 (ETSALGAQSESSAANPTPVQSQR) the composition is skewed to polar residues.

The protein belongs to the TatA/E family. The Tat system comprises two distinct complexes: a TatABC complex, containing multiple copies of TatA, TatB and TatC subunits, and a separate TatA complex, containing only TatA subunits. Substrates initially bind to the TatABC complex, which probably triggers association of the separate TatA complex to form the active translocon.

It is found in the cell membrane. Its function is as follows. Part of the twin-arginine translocation (Tat) system that transports large folded proteins containing a characteristic twin-arginine motif in their signal peptide across membranes. TatA could form the protein-conducting channel of the Tat system. This chain is Sec-independent protein translocase protein TatA, found in Mycolicibacterium paratuberculosis (strain ATCC BAA-968 / K-10) (Mycobacterium paratuberculosis).